Here is a 233-residue protein sequence, read N- to C-terminus: Putative N-acetylmannosamine-6-phosphate 2-epimerase (233 aa).

Belongs to the NanE family.

It carries out the reaction an N-acyl-D-glucosamine 6-phosphate = an N-acyl-D-mannosamine 6-phosphate. Its pathway is amino-sugar metabolism; N-acetylneuraminate degradation; D-fructose 6-phosphate from N-acetylneuraminate: step 3/5. Converts N-acetylmannosamine-6-phosphate (ManNAc-6-P) to N-acetylglucosamine-6-phosphate (GlcNAc-6-P). This is Putative N-acetylmannosamine-6-phosphate 2-epimerase from Yersinia pseudotuberculosis serotype IB (strain PB1/+).